Consider the following 642-residue polypeptide: Uromodulin (642 aa).

The first 24 residues, Met1–Ser24, serve as a signal peptide directing secretion. 2 N-linked (GlcNAc...) asparagine glycosylation sites follow: Asn25 and Asn38. An EGF-like 1 domain is found at Glu28–Glu64. 21 disulfide bridges follow: Cys32-Cys41, Cys35-Cys50, Cys52-Cys63, Cys69-Cys82, Cys77-Cys91, Cys93-Cys105, Cys111-Cys125, Cys119-Cys134, Cys136-Cys147, Cys149-Cys160, Cys154-Cys171, Cys175-Cys268, Cys196-Cys283, Cys218-Cys256, Cys224-Cys288, Cys249-Cys257, Cys298-Cys307, Cys301-Cys316, Cys318-Cys348, Cys336-Cys426, and Cys367-Cys390. Positions Asp65–Thr106 constitute an EGF-like 2; calcium-binding domain. Asn76 and Asn79 each carry an N-linked (GlcNAc...) asparagine glycan. Residues Asp107–Glu148 enclose the EGF-like 3; calcium-binding domain. The tract at residues Cys149 to Gln172 is beta hairpin. The segment at Asp173–Ser292 is D10C. Residue Asn233 is glycosylated (N-linked (GlcNAc...) asparagine). N-linked (GlcNAc...) asparagine glycosylation occurs at Asn276. Residues Ser293 to Ile324 enclose the EGF-like 4 domain. Asn323 carries N-linked (GlcNAc...) asparagine glycosylation. A ZP-N region spans residues Glu335–Leu430. Positions Glu335–Ser590 constitute a ZP domain. N-linked (GlcNAc...) asparagine glycosylation is found at Asn397 and Asn448. A flexible ZP-N/ZP-C linker; important for secretion and polymerization into filaments region spans residues Asp431–Thr454. The interval Gly455–Gln465 is internal hydrophobic patch (IHP). The interval Gly455–Ser590 is ZP-C. 3 cysteine pairs are disulfide-bonded: Cys507–Cys567, Cys528–Cys583, and Cys572–Cys579. A glycan (N-linked (GlcNAc...) asparagine) is linked at Asn514. An essential for cleavage by HPN region spans residues Arg587–Ser590. The interval Val599–Arg607 is external hydrophobic patch (EHP); regulates polymerization into filaments. Residue Ala618 is the site of GPI-anchor amidated alanine attachment. A propeptide spans Ser619–Gln642 (removed in mature form).

Homodimer that then polymerizes into long filaments. The filaments can additionally assemble laterally to form a sheet. The filaments consist of a zigzag-shaped backbone with laterally protruding arms which interact with bacterial adhesin fimH. Two fimH molecules can bind to a single UMOD monomer. Post-translationally, N-glycosylated. Proteolytically cleaved at a conserved C-terminal proteolytic cleavage site to generate the secreted form found in urine. This cleavage is catalyzed by HPN. In terms of tissue distribution, detected in urine (secreted form). Detected in kidney thick ascending limb epithelial cells (at protein level).

The protein localises to the secreted. The protein resides in the apical cell membrane. It is found in the basolateral cell membrane. It localises to the cell projection. Its subcellular location is the cilium membrane. Its function is as follows. Functions in biogenesis and organization of the apical membrane of epithelial cells of the thick ascending limb of Henle's loop (TALH), where it promotes formation of complex filamentous gel-like structure that may play a role in the water barrier permeability. May serve as a receptor for binding and endocytosis of cytokines (IL-1, IL-2) and TNF. Facilitates neutrophil migration across renal epithelia. In terms of biological role, in the urine, may contribute to colloid osmotic pressure, retards passage of positively charged electrolytes and inhibits formation of liquid containing supersaturated salts and subsequent formation of salt crystals. Protects against urinary tract infections by binding to type 1 fimbriated E.coli. Binds to the bacterial adhesin fimH which mediates the stable formation of bacterial aggregates, prevents the binding of E.coli to uroplakins UPK1A and UPK1B which act as urothelial receptors for type I fimbriae, and allows for pathogen clearance through micturation. Also promotes aggregation of other bacteria including K.pneumoniae, P.aeruginosa and S.mitis and so may also protect against other uropathogens. This is Uromodulin (Umod) from Mus musculus (Mouse).